The following is a 404-amino-acid chain: Keratin, type I cuticular Ha3-I (404 aa).

A head region spans residues methionine 1–glutamate 56. Residues glutamate 56–leucine 367 form the IF rod domain. Positions lysine 57–arginine 91 are coil 1A. A linker 1 region spans residues serine 92–serine 102. Positions tyrosine 103–cysteine 203 are coil 1B. Residues glutamine 204–valine 219 form a linker 12 region. The coil 2 stretch occupies residues aspartate 220–glutamate 363. Residues aspartate 364 to tyrosine 404 are tail.

The protein belongs to the intermediate filament family.

This is Keratin, type I cuticular Ha3-I from Pan troglodytes (Chimpanzee).